The chain runs to 271 residues: Mannosyl-3-phosphoglycerate phosphatase (271 aa).

Asp-13 serves as the catalytic Nucleophile. The Mg(2+) site is built by Asp-13, Asp-15, and Asp-214.

Belongs to the HAD-like hydrolase superfamily. MPGP family. Mg(2+) serves as cofactor.

Its subcellular location is the cytoplasm. The enzyme catalyses 2-O-(alpha-D-mannosyl)-3-phosphoglycerate + H2O = (2R)-2-O-(alpha-D-mannosyl)-glycerate + phosphate. The chain is Mannosyl-3-phosphoglycerate phosphatase (yedP) from Escherichia coli O157:H7.